The chain runs to 1728 residues: U3 small nucleolar RNA-associated protein 10 (1728 aa).

HEAT repeat units lie at residues 540–578 (DKDF…LVKE), 881–926 (PANH…MMPA), 986–1024 (FMGS…AYEH), 1191–1229 (LLSI…SEST), 1235–1274 (REAL…KYGK), 1622–1662 (ADAT…GQAA), and 1683–1721 (LQAL…KLGE).

This sequence belongs to the HEATR1/UTP10 family. Component of the ribosomal small subunit (SSU) processome.

Its subcellular location is the nucleus. The protein localises to the nucleolus. In terms of biological role, involved in nucleolar processing of pre-18S ribosomal RNA. Involved in ribosome biosynthesis. This Chaetomium globosum (strain ATCC 6205 / CBS 148.51 / DSM 1962 / NBRC 6347 / NRRL 1970) (Soil fungus) protein is U3 small nucleolar RNA-associated protein 10.